The sequence spans 318 residues: NADH-ubiquinone oxidoreductase chain 1 (318 aa).

8 consecutive transmembrane segments (helical) span residues 3–23 (TTNILCLIIPILLAVAFLTLV), 69–89 (FMFTIAPTLALTLALTLWIPL), 100–120 (LGILFILAVSSLAVYSILWSG), 135–155 (AVAQTISYEVTLAIILLSLVL), 171–191 (HMWLVLPTWPLTMMWFTSTLA), 213–233 (VEYAAGPFALFFMAEYANIIL), 253–273 (ELHTINFITKTLILTTMFLWI), and 294–314 (LPLTLAMCMWHVSTSISFASI).

The protein belongs to the complex I subunit 1 family.

The protein resides in the mitochondrion inner membrane. The enzyme catalyses a ubiquinone + NADH + 5 H(+)(in) = a ubiquinol + NAD(+) + 4 H(+)(out). Functionally, core subunit of the mitochondrial membrane respiratory chain NADH dehydrogenase (Complex I) that is believed to belong to the minimal assembly required for catalysis. Complex I functions in the transfer of electrons from NADH to the respiratory chain. The immediate electron acceptor for the enzyme is believed to be ubiquinone. The polypeptide is NADH-ubiquinone oxidoreductase chain 1 (MT-ND1) (Choloepus didactylus (Southern two-toed sloth)).